The following is a 470-amino-acid chain: MLLPLFFFFLHLHLHLSSSSSISFPDFQIIDVLQPPLTVTATLPDFNNTHFSDESSSKYTLRLLHRDRFPSVTYRNHHHRLHARMRRDTDRVSAILRRISGKVIPSSDSRYEVNDFGSDIVSGMDQGSGEYFVRIGVGSPPRDQYMVIDSGSDMVWVQCQPCKLCYKQSDPVFDPAKSGSYTGVSCGSSVCDRIENSGCHSGGCRYEVMYGDGSYTKGTLALETLTFAKTVVRNVAMGCGHRNRGMFIGAAGLLGIGGGSMSFVGQLSGQTGGAFGYCLVSRGTDSTGSLVFGREALPVGASWVPLVRNPRAPSFYYVGLKGLGVGGVRIPLPDGVFDLTETGDGGVVMDTGTAVTRLPTAAYVAFRDGFKSQTANLPRASGVSIFDTCYDLSGFVSVRVPTVSFYFTEGPVLTLPARNFLMPVDDSGTYCFAFAASPTGLSIIGNIQQEGIQVSFDGANGFVGFGPNVC.

Residues Met-1–Ser-19 form the signal peptide. The Peptidase A1 domain occupies Tyr-131–Gly-466. Residue Asp-149 is part of the active site. Intrachain disulfides connect Cys-159-Cys-162, Cys-165-Cys-239, Cys-186-Cys-204, Cys-191-Cys-199, Cys-278-Cys-470, and Cys-389-Cys-431. Residue Asp-350 is part of the active site.

Belongs to the peptidase A1 family.

Aspartic protease that may be involved in drought avoidance through abscisic acid signaling. This is Protein ASPARTIC PROTEASE IN GUARD CELL 2 (ASPG2) from Arabidopsis thaliana (Mouse-ear cress).